The chain runs to 72 residues: Small ribosomal subunit protein bS18c (72 aa).

This sequence belongs to the bacterial ribosomal protein bS18 family. Part of the 30S ribosomal subunit.

The protein localises to the plastid. The protein resides in the chloroplast. This Emiliania huxleyi (Coccolithophore) protein is Small ribosomal subunit protein bS18c.